A 317-amino-acid chain; its full sequence is METWQEVTVHVHRDAQEAVSYVLIETGSQGVAIADSADYIGQKDRFGELYPDVEQSDMIAITAYYPSSTNLADVIATINEQLAELASFGLQVGQVTVDSQELAEEDWADNWKKYYEPARITHDLTIVPSWTDYDASAGEKVIKLDPGMAFGTGTHPTTKMSLFALEQILRGGETVIDVGTGSGVLSIASSLLGAKTIYAYDLDDVAVRVAQENIDLNQGTDNIHVAAGDLLKGVSQEADVIVANILADILVLLTDDAYRLVKDQGYLILSGIISEKLDMVLEAAFSAGFFLETHMIQGEWNALVFKKTDDISGVIGG.

S-adenosyl-L-methionine is bound by residues Thr-158, Gly-179, Asp-201, and Asn-244.

This sequence belongs to the methyltransferase superfamily. PrmA family.

The protein resides in the cytoplasm. It carries out the reaction L-lysyl-[protein] + 3 S-adenosyl-L-methionine = N(6),N(6),N(6)-trimethyl-L-lysyl-[protein] + 3 S-adenosyl-L-homocysteine + 3 H(+). Functionally, methylates ribosomal protein L11. The sequence is that of Ribosomal protein L11 methyltransferase from Streptococcus pyogenes serotype M5 (strain Manfredo).